A 535-amino-acid polypeptide reads, in one-letter code: MRLRNGTVATVLAFITSFLTLSWYTTWQNGKEKVIAYQREFLALKERLRIAEHRISQRSSELSAIVQQFKRVEAETNRSKDPVNKFSDDTLKILKELTSKKSLQVPSIYYHLPHLLQNEGSLQPAVQIGNGRTGVSIVMGIPTVKREVKSYLIETLHSLIDNLYPEEKLDCVIVVFIGETDTDYVNGVVANLEKEFSKEISSGLVEIISPPESYYPDLTNLKETFGDSKERVRWRTKQNLDYCFLMMYAQEKGTYYIQLEDDIIVKQNYFNTIKNFALQLSSEEWMILEFSQLGFIGKMFQAPDLTLIVEFIFMFYKEKPIDWLLDHILWVKVCNPEKDAKHCDRQKANLRIRFRPSLFQHVGLHSSLTGKIQKLTDKDYMKPLLLKIHVNPPAEVSTSLKVYQGHTLEKTYMGEDFFWAITPVAGDYILFKFDKPVNVESYLFHSGNQDHPGDILLNTTVEVLPLKSEGLDISKETKDKRLEDGYFRIGKFENGVAEGMVDPSLNPISAFRLSVIQNSAVWAILNEIHIKKVTN.

Topologically, residues 1 to 6 are cytoplasmic; the sequence is MRLRNG. Residues 7–27 form a helical; Signal-anchor for type II membrane protein membrane-spanning segment; that stretch reads TVATVLAFITSFLTLSWYTTW. Residues 28–535 are Lumenal-facing; it reads QNGKEKVIAY…NEIHIKKVTN (508 aa). Residues 31-57 adopt a coiled-coil conformation; sequence KEKVIAYQREFLALKERLRIAEHRISQ. Residues asparagine 77 and asparagine 458 are each glycosylated (N-linked (GlcNAc...) asparagine). Phosphoserine is present on serine 474.

Belongs to the glycosyltransferase 54 family. Requires a divalent metal cation as cofactor. N-glycosylated. As to expression, highly expressed in small intestine, kidney, lung and spleen. Weakly expressed in brain, heart and liver.

It localises to the golgi apparatus membrane. Its subcellular location is the secreted. It carries out the reaction N(4)-{beta-D-GlcNAc-(1-&gt;2)-alpha-D-Man-(1-&gt;3)-[beta-D-GlcNAc-(1-&gt;2)-alpha-D-Man-(1-&gt;6)]-beta-D-Man-(1-&gt;4)-beta-D-GlcNAc-(1-&gt;4)-beta-D-GlcNAc}-L-asparaginyl-[protein] + UDP-N-acetyl-alpha-D-glucosamine = N(4)-{beta-D-GlcNAc-(1-&gt;2)-[beta-D-GlcNAc-(1-&gt;4)]-alpha-D-Man-(1-&gt;3)-[beta-D-GlcNAc-(1-&gt;2)-alpha-D-Man-(1-&gt;6)]-beta-D-Man-(1-&gt;4)-beta-D-GlcNAc-(1-&gt;4)-beta-D-GlcNAc}-L-asparaginyl-[protein] + UDP + H(+). The enzyme catalyses an N(4)-{beta-D-GlcNAc-(1-&gt;2)-alpha-D-Man-(1-&gt;3)-[alpha-D-Man-(1-&gt;6)]-beta-D-Man-(1-&gt;4)-beta-D-GlcNAc-(1-&gt;4)-beta-D-GlcNAc}-L-asparaginyl-[protein] + UDP-N-acetyl-alpha-D-glucosamine = an N(4)-{beta-D-GlcNAc-(1-&gt;2)-[beta-D-GlcNAc-(1-&gt;4)]-alpha-D-Man-(1-&gt;3)-[alpha-D-Man-(1-&gt;6)]-beta-D-Man-(1-&gt;4)-beta-D-GlcNAc-(1-&gt;4)-beta-D-GlcNAc}-L-asparaginyl-[protein] + UDP + H(+). The catalysed reaction is an N(4)-{beta-D-GlcNAc-(1-&gt;2)-alpha-D-Man-(1-&gt;3)-[beta-D-GlcNAc-(1-&gt;2)-[beta-D-GlcNAc-(1-&gt;6)]-alpha-D-Man-(1-&gt;6)]-beta-D-Man-(1-&gt;4)-beta-D-GlcNAc-(1-&gt;4)-beta-D-GlcNAc}-L-asparaginyl-[protein] + UDP-N-acetyl-alpha-D-glucosamine = an N(4)-{beta-D-GlcNAc-(1-&gt;2)-[beta-D-GlcNAc-(1-&gt;4)]-alpha-D-Man-(1-&gt;3)-[beta-D-GlcNAc-(1-&gt;2)-[beta-D-GlcNAc-(1-&gt;6)]-alpha-D-Man-(1-&gt;6)]-beta-D-Man-(1-&gt;4)-beta-D-GlcNAc-(1-&gt;4)-beta-D-GlcNAc}-L-asparaginyl-[protein] + UDP + H(+). It catalyses the reaction an N(4)-{beta-D-GlcNAc-(1-&gt;2)-alpha-D-Man-(1-&gt;3)-[beta-D-GlcNAc-(1-&gt;2)-alpha-D-Man-(1-&gt;6)]-beta-D-Man-(1-&gt;4)-beta-D-GlcNAc-(1-&gt;4)-[alpha-L-Fuc-(1-&gt;6)]-beta-D-GlcNAc}-L-asparaginyl-[protein] + UDP-N-acetyl-alpha-D-glucosamine = N(4)-{beta-D-GlcNAc-(1-&gt;2)-[beta-D-GlcNAc-(1-&gt;4)]-alpha-D-Man-(1-&gt;3)-[beta-D-GlcNAc-(1-&gt;2)-alpha-D-Man-(1-&gt;6)]-beta-D-Man-(1-&gt;4)-beta-D-GlcNAc-(1-&gt;4)-[alpha-L-Fuc-(1-&gt;6)]-beta-D-GlcNAc}-asparaginyl-[protein] + UDP + H(+). It carries out the reaction an N(4)-{beta-D-GlcNAc-(1-&gt;2)-alpha-D-Man-(1-&gt;3)-[beta-D-Gal-(1-&gt;4)-beta-D-GlcNAc-(1-&gt;2)-alpha-D-Man-(1-&gt;6)]-beta-D-Man-(1-&gt;4)-beta-D-GlcNAc-(1-&gt;4)-beta-D-GlcNAc}-L-asparaginyl-[protein] + UDP-N-acetyl-alpha-D-glucosamine = an N(4)-{beta-D-GlcNAc-(1-&gt;2)-[beta-D-GlcNAc-(1-&gt;4)]-alpha-D-Man-(1-&gt;3)-[beta-D-Gal-(1-&gt;4)-beta-D-GlcNAc-(1-&gt;2)-alpha-D-Man-(1-&gt;6)]-beta-D-Man-(1-&gt;4)-beta-D-GlcNAc-(1-&gt;4)-beta-D-GlcNAc}-L-asparaginyl-[protein] + UDP + H(+). The enzyme catalyses N(4)-{beta-D-GlcNAc-(1-&gt;2)-alpha-D-Man-(1-&gt;3)-[alpha-D-Man-(1-&gt;3)-{alpha-D-Man-(1-&gt;6)}-alpha-D-Man-(1-&gt;6)]-beta-D-Man-(1-&gt;4)-beta-D-GlcNAc-(1-&gt;4)-beta-D-GlcNAc}-asparaginyl-[protein] + UDP-N-acetyl-alpha-D-glucosamine = N(4)-{beta-D-GlcNAc-(1-&gt;2)-[beta-D-GlcNAc-(1-&gt;4)]-alpha-D-Man-(1-&gt;3)-[alpha-D-Man-(1-&gt;3)-{alpha-D-Man-(1-&gt;6)}-alpha-D-Man-(1-&gt;6)]-beta-D-Man-(1-&gt;4)-beta-D-GlcNAc-(1-&gt;4)-beta-D-GlcNAc}-asparaginyl-[protein] + UDP + H(+). The catalysed reaction is N(4)-{beta-D-GlcNAc-(1-&gt;2)-alpha-D-Man-(1-&gt;3)-beta-D-Man-(1-&gt;4)-beta-D-GlcNAc-(1-&gt;4)-beta-D-GlcNAc}-asparaginyl-[protein] + UDP-N-acetyl-alpha-D-glucosamine = N(4)-{beta-D-GlcNAc-(1-&gt;2)-[beta-D-GlcNAc-(1-&gt;4)]-alpha-D-Man-(1-&gt;3)-beta-D-Man-(1-&gt;4)-beta-D-GlcNAc-(1-&gt;4)-beta-D-GlcNAc}-asparaginyl-[protein] + UDP + H(+). The protein operates within protein modification; protein glycosylation. Its activity is regulated as follows. Inhibited by UDP. Its function is as follows. Glycosyltransferase that catalyze the transfer of GlcNAc from UDP-GlcNAc to the GlcNAcbeta1-2Manalpha1-3 arm of the core structure of N-linked glycans through a beta1-4 linkage and participates in the production of tri- and tetra-antennary N-linked sugar chains. Involved in glucose transport by mediating SLC2A2/GLUT2 glycosylation, thereby controlling cell-surface expression of SLC2A2 in pancreatic beta cells. In Bos taurus (Bovine), this protein is Alpha-1,3-mannosyl-glycoprotein 4-beta-N-acetylglucosaminyltransferase A.